We begin with the raw amino-acid sequence, 213 residues long: ER lumen protein-retaining receptor erd-2.2 (213 aa).

Topologically, residues 1 to 2 are lumenal; sequence MN. The helical transmembrane segment at 3-21 threads the bilayer; the sequence is IFRISADMSHLLAIIILLL. Residues 22–35 are Cytoplasmic-facing; the sequence is KIWKSRSCSGISAR. A helical transmembrane segment spans residues 36–53; the sequence is SQILFALVFTARYLDLFS. Residues 54–61 lie on the Lumenal side of the membrane; sequence TYISLYNT. Residues 62 to 80 traverse the membrane as a helical segment; it reads TMKITFLAATYATVYLMFF. The Cytoplasmic portion of the chain corresponds to 81–96; that stretch reads KFRSTYMRESDTFRVE. A helical membrane pass occupies residues 97 to 110; it reads LLIVPAAILALLIN. At 111–117 the chain is on the lumenal side; sequence HDFAPFE. The helical transmembrane segment at 118 to 137 threads the bilayer; that stretch reads LLWTFSIYLEAVAILPQLFL. Residues 138–149 are Cytoplasmic-facing; it reads LQSTGSAEVITA. Residues 150–168 form a helical membrane-spanning segment; sequence HYLFALGSYRALYIFNWIY. The Lumenal portion of the chain corresponds to 169–178; it reads RYYTEDYFDP. A helical transmembrane segment spans residues 179-199; that stretch reads IVVVAGIVQTVLYADFFYLYV. The Cytoplasmic portion of the chain corresponds to 200-213; that stretch reads TRVVQTRKGMELPI.

This sequence belongs to the ERD2 family.

It localises to the endoplasmic reticulum membrane. Its function is as follows. Required for the retention of luminal endoplasmic reticulum proteins. Determines the specificity of the luminal ER protein retention system. Also required for normal vesicular traffic through the Golgi. The chain is ER lumen protein-retaining receptor erd-2.2 from Caenorhabditis elegans.